A 491-amino-acid polypeptide reads, in one-letter code: Dipeptide and tripeptide permease B (491 aa).

The Cytoplasmic portion of the chain corresponds to 1–26 (MNNTAPGLLHQPKPFFMIFFVELWER). A helical transmembrane segment spans residues 27 to 47 (FGYYGVQGILAVFFVKQLGFS). The Periplasmic segment spans residues 48–51 (QEQA). A helical membrane pass occupies residues 52–72 (FITFGAFAALVYGLISIGGYV). Topologically, residues 73–81 (GDHLLGTKR) are cytoplasmic. Residues 82–102 (TMVLGAIVLALGYFMTGMSLL) form a helical membrane-spanning segment. The Periplasmic segment spans residues 103–105 (KPE). The chain crosses the membrane as a helical span at residues 106 to 126 (MIFIALGTIAVGNGLFKANPA). The Cytoplasmic segment spans residues 127–145 (SLLSKCYPPKDPRLDGAFT). A helical transmembrane segment spans residues 146–166 (LFYMSINIGSLLSLSLAPIIA). At 167–171 (ERFGY) the chain is on the periplasmic side. A helical membrane pass occupies residues 172–192 (AVTYNLCGLGLIIALLVYFAC). At 193–210 (RGMVRSIGSAPDHQPLNY) the chain is on the cytoplasmic side. A helical transmembrane segment spans residues 211–231 (GKLLLVLAGAVVMIFLCAWLM). A topological domain (periplasmic) is located at residue histidine 232. A helical transmembrane segment spans residues 233 to 253 (NVGVANIVLIAVSAVVLYFFF). Residues 254-266 (REAFKQDKTGRNR) are Cytoplasmic-facing. The chain crosses the membrane as a helical span at residues 267-287 (MFVAFILMIEAVLFYILYAQM). Residues 288–312 (PTSLNFFAINNVRHELLGFAINPVS) are Periplasmic-facing. The chain crosses the membrane as a helical span at residues 313-335 (FQALNPFWVVVASPILASIYTRL). The Cytoplasmic portion of the chain corresponds to 336 to 349 (GSRGRDMTMPTKFT). A helical transmembrane segment spans residues 350 to 370 (LGMLLCSLGFLTAAAAGMWFA). Over 371–378 (DAQGLTSP) the chain is Periplasmic. Residues 379 to 399 (WFVVLVYLFQSLGELMISALG) form a helical membrane-spanning segment. Over 400 to 423 (LAMVAALVPQYLMGFILGMWFLTQ) the chain is Cytoplasmic. The chain crosses the membrane as a helical span at residues 424–444 (AAAFLLGGYVATFTAVPAGIH). Topologically, residues 445-454 (DPLQTLPIYT) are periplasmic. A helical membrane pass occupies residues 455 to 475 (GVFGKIGIATLIVTLVMAAMV). Residues 476 to 491 (PWLNRMMNTPADGQKA) lie on the Cytoplasmic side of the membrane.

The protein belongs to the major facilitator superfamily. Proton-dependent oligopeptide transporter (POT/PTR) (TC 2.A.17) family. DtpB subfamily.

The protein resides in the cell inner membrane. In terms of biological role, proton-dependent permease that transports di- and tripeptides. In Edwardsiella piscicida, this protein is Dipeptide and tripeptide permease B.